A 453-amino-acid chain; its full sequence is 3-phosphoshikimate 1-carboxyvinyltransferase (453 aa).

Residues 1-12 (MDVNVTSSTVRG) show a composition bias toward polar residues. The segment at 1-21 (MDVNVTSSTVRGTTRAPPSKS) is disordered. 3 residues coordinate 3-phosphoshikimate: Lys20, Ser21, and Arg25. Lys20 lines the phosphoenolpyruvate pocket. Phosphoenolpyruvate-binding residues include Gly97 and Arg125. Positions 170, 171, 172, 198, 330, and 357 each coordinate 3-phosphoshikimate. Gln172 provides a ligand contact to phosphoenolpyruvate. The active-site Proton acceptor is the Asp330. Phosphoenolpyruvate is bound by residues Arg361 and Arg404.

Belongs to the EPSP synthase family. As to quaternary structure, monomer.

It is found in the cytoplasm. It carries out the reaction 3-phosphoshikimate + phosphoenolpyruvate = 5-O-(1-carboxyvinyl)-3-phosphoshikimate + phosphate. The protein operates within metabolic intermediate biosynthesis; chorismate biosynthesis. In terms of biological role, catalyzes the transfer of the enolpyruvyl moiety of phosphoenolpyruvate (PEP) to the 5-hydroxyl of shikimate-3-phosphate (S3P) to produce enolpyruvyl shikimate-3-phosphate and inorganic phosphate. This chain is 3-phosphoshikimate 1-carboxyvinyltransferase, found in Halorubrum lacusprofundi (strain ATCC 49239 / DSM 5036 / JCM 8891 / ACAM 34).